Here is a 105-residue protein sequence, read N- to C-terminus: Malonate decarboxylase acyl carrier protein (105 aa).

S28 carries the post-translational modification O-(phosphoribosyl dephospho-coenzyme A)serine.

The protein belongs to the MdcC family. In terms of processing, covalently binds the prosthetic group of malonate decarboxylase.

It is found in the cytoplasm. Its function is as follows. Subunit of malonate decarboxylase, it is an acyl carrier protein to which acetyl and malonyl thioester residues are bound via a 2'-(5''-phosphoribosyl)-3'-dephospho-CoA prosthetic group and turn over during the catalytic mechanism. This Xanthomonas axonopodis pv. citri (strain 306) protein is Malonate decarboxylase acyl carrier protein.